A 391-amino-acid chain; its full sequence is 1-deoxy-D-xylulose 5-phosphate reductoisomerase (391 aa).

Residues T17, G18, S19, I20, N47, and N130 each contribute to the NADPH site. Residue K131 participates in 1-deoxy-D-xylulose 5-phosphate binding. E132 lines the NADPH pocket. Position 156 (D156) interacts with Mn(2+). The 1-deoxy-D-xylulose 5-phosphate site is built by S157, E158, S182, and H205. E158 lines the Mn(2+) pocket. G211 provides a ligand contact to NADPH. Residues S218, N223, K224, and E227 each contribute to the 1-deoxy-D-xylulose 5-phosphate site. Residue E227 participates in Mn(2+) binding.

Belongs to the DXR family. Mg(2+) is required as a cofactor. Mn(2+) serves as cofactor.

The enzyme catalyses 2-C-methyl-D-erythritol 4-phosphate + NADP(+) = 1-deoxy-D-xylulose 5-phosphate + NADPH + H(+). It participates in isoprenoid biosynthesis; isopentenyl diphosphate biosynthesis via DXP pathway; isopentenyl diphosphate from 1-deoxy-D-xylulose 5-phosphate: step 1/6. Its function is as follows. Catalyzes the NADPH-dependent rearrangement and reduction of 1-deoxy-D-xylulose-5-phosphate (DXP) to 2-C-methyl-D-erythritol 4-phosphate (MEP). This Sinorhizobium medicae (strain WSM419) (Ensifer medicae) protein is 1-deoxy-D-xylulose 5-phosphate reductoisomerase.